Here is a 206-residue protein sequence, read N- to C-terminus: Potassium-transporting ATPase KdpC subunit (206 aa).

A helical transmembrane segment spans residues 14-34; the sequence is VLAVFTLFGLGLAYSLIATGI.

It belongs to the KdpC family. In terms of assembly, the system is composed of three essential subunits: KdpA, KdpB and KdpC.

The protein resides in the cell inner membrane. Part of the high-affinity ATP-driven potassium transport (or Kdp) system, which catalyzes the hydrolysis of ATP coupled with the electrogenic transport of potassium into the cytoplasm. This subunit acts as a catalytic chaperone that increases the ATP-binding affinity of the ATP-hydrolyzing subunit KdpB by the formation of a transient KdpB/KdpC/ATP ternary complex. In Xanthomonas axonopodis pv. citri (strain 306), this protein is Potassium-transporting ATPase KdpC subunit.